Reading from the N-terminus, the 299-residue chain is MLESHLIIYFLLAVIQFLLGIFTNGIIVVVNGIDLIKHRKMAPLDLLLSCLAVSRIFLQLFIFYVNVIVIFFIEFIMCSANCAILLFINELELWLATWLGVFYCAKVASVRHPLFXWLKMRISKLVPWMILGSLLYVSMICVFHSKYAGFMVPYFLRNFFSQNTTIQKEDTLAIQIFSFVAEFSVPLLIFLVAVLLLIFSLGRHTRQMRNTVAGSRVPGRGAPISALLSILSFLILYFSHCMIKVFLSSLKFHIRRFIFLFFILVIGIYPSGHSLILILGNPKLKQNAKKFLLHSKCCQ.

Topologically, residues 1–9 (MLESHLIIY) are extracellular. Residues 10-30 (FLLAVIQFLLGIFTNGIIVVV) form a helical membrane-spanning segment. At 31–55 (NGIDLIKHRKMAPLDLLLSCLAVSR) the chain is on the cytoplasmic side. Residues 56–76 (IFLQLFIFYVNVIVIFFIEFI) form a helical membrane-spanning segment. The Extracellular segment spans residues 77-81 (MCSAN). The chain crosses the membrane as a helical span at residues 82–102 (CAILLFINELELWLATWLGVF). Topologically, residues 103-124 (YCAKVASVRHPLFXWLKMRISK) are cytoplasmic. A helical membrane pass occupies residues 125–145 (LVPWMILGSLLYVSMICVFHS). The Extracellular portion of the chain corresponds to 146 to 178 (KYAGFMVPYFLRNFFSQNTTIQKEDTLAIQIFS). The N-linked (GlcNAc...) asparagine glycan is linked to asparagine 163. Residues 179 to 199 (FVAEFSVPLLIFLVAVLLLIF) traverse the membrane as a helical segment. The Cytoplasmic portion of the chain corresponds to 200–222 (SLGRHTRQMRNTVAGSRVPGRGA). A helical transmembrane segment spans residues 223–243 (PISALLSILSFLILYFSHCMI). At 244–257 (KVFLSSLKFHIRRF) the chain is on the extracellular side. A helical transmembrane segment spans residues 258-278 (IFLFFILVIGIYPSGHSLILI). Over 279 to 299 (LGNPKLKQNAKKFLLHSKCCQ) the chain is Cytoplasmic.

Belongs to the G-protein coupled receptor T2R family.

Its subcellular location is the membrane. Its function is as follows. Receptor that may play a role in the perception of bitterness and is gustducin-linked. May play a role in sensing the chemical composition of the gastrointestinal content. The activity of this receptor may stimulate alpha gustducin, mediate PLC-beta-2 activation and lead to the gating of TRPM5. The polypeptide is Taste receptor type 2 member 1 (TAS2R1) (Gorilla gorilla gorilla (Western lowland gorilla)).